The primary structure comprises 751 residues: Catalase-peroxidase (751 aa).

Residues 92–240 constitute a cross-link (tryptophyl-tyrosyl-methioninium (Trp-Tyr) (with M-266)); that stretch reads WHSAGTYRVT…VAAAHMGLIY (149 aa). The active-site Proton acceptor is His-93. Positions 240 to 266 form a cross-link, tryptophyl-tyrosyl-methioninium (Tyr-Met) (with W-92); that stretch reads YVNPEGPDGVPDPIAAARDIRTTFHRM. A heme b-binding site is contributed by His-281.

This sequence belongs to the peroxidase family. Peroxidase/catalase subfamily. In terms of assembly, homodimer or homotetramer. Requires heme b as cofactor. In terms of processing, formation of the three residue Trp-Tyr-Met cross-link is important for the catalase, but not the peroxidase activity of the enzyme.

It is found in the cytoplasm. The enzyme catalyses H2O2 + AH2 = A + 2 H2O. The catalysed reaction is 2 H2O2 = O2 + 2 H2O. In terms of biological role, bifunctional enzyme with both catalase and broad-spectrum peroxidase activity. The sequence is that of Catalase-peroxidase from Phaeosphaeria nodorum (strain SN15 / ATCC MYA-4574 / FGSC 10173) (Glume blotch fungus).